The following is a 366-amino-acid chain: CRS2-associated factor 2, mitochondrial (366 aa).

A mitochondrion-targeting transit peptide spans 1 to 14 (MLLPRDLLLLPWRR). Residues 24–82 (RRLNHHRAPPFSDPDDDPPFTRLAERPPRAPSKKKKKEEEDQGGRIRPPEPASSDLPFD) form a disordered region. Residues 60–71 (KEEEDQGGRIRP) are compositionally biased toward basic and acidic residues. 2 consecutive CRM domains span residues 143–241 (EPLA…QRPQ) and 263–359 (DGLT…SVSL).

In terms of assembly, part of large ribonucleo-protein complexes that include group IIB introns.

It is found in the mitochondrion. In terms of biological role, may be involved in the splicing of group IIB introns in mitochondria. This chain is CRS2-associated factor 2, mitochondrial, found in Oryza sativa subsp. japonica (Rice).